The primary structure comprises 147 residues: MKNLKKQRRIQVIALATVALVLSTALIGYAMRDGINFFRAPTQILAEPPAPTEVFRIGGLVEEGSIVRGQGETIRFSVTDGNGVVPVTYTGVLPDLFEENQGMVGTGSYINGVFEASEILAKHDETYMPAEVVDMLKEQGVYKGTEG.

Residues 1 to 9 lie on the Cytoplasmic side of the membrane; the sequence is MKNLKKQRR. Residues 10–30 form a helical; Signal-anchor for type II membrane protein membrane-spanning segment; the sequence is IQVIALATVALVLSTALIGYA. The Periplasmic segment spans residues 31 to 147; that stretch reads MRDGINFFRA…EQGVYKGTEG (117 aa). Residues H123 and Y127 each coordinate heme.

This sequence belongs to the CcmE/CycJ family.

It localises to the cell inner membrane. Its function is as follows. Heme chaperone required for the biogenesis of c-type cytochromes. Transiently binds heme delivered by CcmC and transfers the heme to apo-cytochromes in a process facilitated by CcmF and CcmH. This chain is Cytochrome c-type biogenesis protein CcmE, found in Roseobacter denitrificans (strain ATCC 33942 / OCh 114) (Erythrobacter sp. (strain OCh 114)).